We begin with the raw amino-acid sequence, 132 residues long: Small ribosomal subunit protein uS8 (132 aa).

The protein belongs to the universal ribosomal protein uS8 family. Part of the 30S ribosomal subunit. Contacts proteins S5 and S12.

Functionally, one of the primary rRNA binding proteins, it binds directly to 16S rRNA central domain where it helps coordinate assembly of the platform of the 30S subunit. This is Small ribosomal subunit protein uS8 from Agrobacterium fabrum (strain C58 / ATCC 33970) (Agrobacterium tumefaciens (strain C58)).